The chain runs to 490 residues: Probable cytosol aminopeptidase (490 aa).

Mn(2+)-binding residues include Lys262 and Asp267. Residue Lys274 is part of the active site. 3 residues coordinate Mn(2+): Asp285, Asp344, and Glu346. Residue Arg348 is part of the active site.

It belongs to the peptidase M17 family. The cofactor is Mn(2+).

The protein localises to the cytoplasm. It catalyses the reaction Release of an N-terminal amino acid, Xaa-|-Yaa-, in which Xaa is preferably Leu, but may be other amino acids including Pro although not Arg or Lys, and Yaa may be Pro. Amino acid amides and methyl esters are also readily hydrolyzed, but rates on arylamides are exceedingly low.. It carries out the reaction Release of an N-terminal amino acid, preferentially leucine, but not glutamic or aspartic acids.. Functionally, presumably involved in the processing and regular turnover of intracellular proteins. Catalyzes the removal of unsubstituted N-terminal amino acids from various peptides. The chain is Probable cytosol aminopeptidase from Xanthomonas axonopodis pv. citri (strain 306).